We begin with the raw amino-acid sequence, 441 residues long: Tol-Pal system protein TolB (441 aa).

An N-terminal signal peptide occupies residues 1–39 (MPTMTPAFSRASLSEALRSYGLALLLFLATLLAWQPAHA).

This sequence belongs to the TolB family. As to quaternary structure, the Tol-Pal system is composed of five core proteins: the inner membrane proteins TolA, TolQ and TolR, the periplasmic protein TolB and the outer membrane protein Pal. They form a network linking the inner and outer membranes and the peptidoglycan layer.

It localises to the periplasm. Its function is as follows. Part of the Tol-Pal system, which plays a role in outer membrane invagination during cell division and is important for maintaining outer membrane integrity. The chain is Tol-Pal system protein TolB from Bordetella avium (strain 197N).